Consider the following 408-residue polypeptide: Succinylornithine transaminase (408 aa).

Lys252 carries the post-translational modification N6-(pyridoxal phosphate)lysine.

It belongs to the class-III pyridoxal-phosphate-dependent aminotransferase family. AstC subfamily. It depends on pyridoxal 5'-phosphate as a cofactor.

The enzyme catalyses N(2)-succinyl-L-ornithine + 2-oxoglutarate = N-succinyl-L-glutamate 5-semialdehyde + L-glutamate. It functions in the pathway amino-acid degradation; L-arginine degradation via AST pathway; L-glutamate and succinate from L-arginine: step 3/5. In terms of biological role, catalyzes the transamination of N(2)-succinylornithine and alpha-ketoglutarate into N(2)-succinylglutamate semialdehyde and glutamate. Can also act as an acetylornithine aminotransferase. This Salmonella agona (strain SL483) protein is Succinylornithine transaminase.